A 509-amino-acid chain; its full sequence is Diacylglycerol kinase 5 (509 aa).

In terms of domain architecture, DAGKc spans 36-187 (TPASPVLVFI…IDNWHILMRM (152 aa)). The span at 439 to 452 (RSVFDPSTPRHQDG) shows a compositional bias: basic and acidic residues. Positions 439 to 509 (RSVFDPSTPR…SNVHGWSHVL (71 aa)) are disordered. The segment covering 453 to 467 (AEDYDDNEDDSVAEG) has biased composition (acidic residues). Over residues 468–489 (EEFRKFGAADTFKIPDEGEHSN) the composition is skewed to basic and acidic residues. The segment covering 490–500 (KKGRASRRRNS) has biased composition (basic residues).

Belongs to the eukaryotic diacylglycerol kinase family. As to quaternary structure, monomer.

It carries out the reaction a 1,2-diacyl-sn-glycerol + ATP = a 1,2-diacyl-sn-glycero-3-phosphate + ADP + H(+). Its function is as follows. Phosphorylates the second messenger diacylglycerol (DAG) to generate phosphatidic acid (PA), another important signaling molecule. PA is required for plant development and responses to abiotic stress and pathogen attack. May be involved in the accumulation of PA during cold stress. This chain is Diacylglycerol kinase 5 (DGK5), found in Arabidopsis thaliana (Mouse-ear cress).